The chain runs to 425 residues: Endoplasmic reticulum junction formation protein lunapark (425 aa).

A lipid anchor (N-myristoyl glycine) is attached at Gly2. Topologically, residues 2–45 (GGLFSRWRAKPSTVEVLENIDKEIQALEEFREKNQRLQKLWVGR) are cytoplasmic. The stretch at 15-41 (VEVLENIDKEIQALEEFREKNQRLQKL) forms a coiled coil. A helical membrane pass occupies residues 46–66 (LIIYSSILYLFTCLIVYLWYL). Over 67 to 77 (PDEFTARLVMT) the chain is Lumenal. The helical transmembrane segment at 78 to 98 (LPFFAFPLIIWTLRTVLIFFF) threads the bilayer. The Cytoplasmic segment spans residues 99-425 (SKRTERNNEA…EPSEESLVTK (327 aa)). Residues 101–128 (RTERNNEALDDLKSQKKKILEEVMEKET) adopt a coiled-coil conformation. Ser114, Ser153, Ser177, Ser182, and Ser194 each carry phosphoserine. A disordered region spans residues 144 to 242 (KKAKEFEPPS…HPPGPPLARP (99 aa)). Positions 186–195 (GPPPQGPVSP) are enriched in pro residues. Thr211 is subject to Phosphothreonine. Ser222 is modified (phosphoserine). A C4-type; plays a role in ER morphology zinc finger spans residues 271–296 (CQQCFSHNGMALKEEFEYIAFRCAYC). Phosphoserine is present on residues Ser316, Ser348, and Ser380. The segment at 320 to 425 (RQAVEGSSST…EPSEESLVTK (106 aa)) is disordered. Positions 384–398 (EPAENQEETENEETS) are enriched in acidic residues. Ser411 carries the post-translational modification Phosphoserine.

The protein belongs to the lunapark family. As to quaternary structure, homodimer; homodimerization requires the C4-type zinc finger motif and decreases during mitosis in a phosphorylation-dependent manner. Myristoylated; myristoylation is necessary for the endoplasmic reticulum (ER) three-way ER tubular junction formation, but is not required neither for membrane translocation, membrane topology formation, nor for the specific localization to ER membranes. Post-translationally, phosphorylated. Phosphorylation occurs at Ser-177, Ser-182, Ser-222, Ser-316 and Ser-380 during interphase. Phosphorylation occurs at Ser-114, Ser-153, Ser-194, Thr-211 and Ser-348 during mitosis; these phosphorylations reduce both its homodimerization and the ER three-way tubular junction formation. In terms of processing, subject to proteasomal degradation following phosphorylation during mitosis. In terms of tissue distribution, expressed in most tissues at basal level, with reinforcement in distal limb buds, genital bud, and in parts of the central nervous system.

It localises to the endoplasmic reticulum membrane. Functionally, endoplasmic reticulum (ER)-shaping membrane protein that plays a role in determining ER morphology. Involved in the stabilization of nascent three-way ER tubular junctions within the ER network. May also play a role as a curvature-stabilizing protein within three-way ER tubular junction network. May be involved in limb and central nervous system development. The protein is Endoplasmic reticulum junction formation protein lunapark of Mus musculus (Mouse).